The sequence spans 227 residues: MDGFSNMEQAPLAYQEVQWLAETFVTFMGLGWLINYVLMIWHSRRGEPSSMALIPLCNNIAWELVYTIIYPSPNKVELAAFIAGVTLNFLIMTSAARSARSEWSHSPTMAKHAGLIIVAGILMCFTGHVALAMEIGPALAYSWGAVICQLALSIGGVCQLLQQHSTGGTSWKLWSSRFLGSCCAVGFAFLRWRYWPEAYGWLASPLILWSLATFLVADLTYGVCLLL.

7 helical membrane-spanning segments follow: residues L20 to I40, M51 to P71, V76 to A96, A113 to M133, I135 to G155, L173 to W195, and L206 to L226.

This sequence belongs to the paxB family.

Its subcellular location is the membrane. It functions in the pathway secondary metabolite biosynthesis. Terpene cyclase; part of the gene cluster that mediates the biosynthesis of lolitrems, indole-diterpene mycotoxins that are potent tremorgens in mammals, and are synthesized by clavicipitaceous fungal endophytes in association with their grass hosts. The geranylgeranyl diphosphate (GGPP) synthase ltmG is proposed to catalyze the first step in lolitrem biosynthesis. LtmG catalyzes a series of iterative condensations of isopentenyl diphosphate (IPP) with dimethylallyl diphosphate (DMAPP), geranyl diphosphate (GPP), and farnesyl diphosphate (FPP), to form GGPP. GGPP then condenses with indole-3-glycerol phosphate to form 3-geranylgeranylindole, an acyclic intermediate, to be incorporated into paxilline. Either ltmG or ltmC could be responsible for this step, as both are putative prenyl transferases. The FAD-dependent monooxygenase ltmM then catalyzes the epoxidation of the two terminal alkenes of the geranylgeranyl moiety, which is subsequently cyclized by ltmB, to paspaline. The cytochrome P450 monooxygenases ltmQ and ltmP can sequentially oxidize paspaline to terpendole E and terpendole F. Alternatively, ltmP converts paspaline to an intermediate which is oxidized by ltmQ to terpendole F. LtmF, ltmK, ltmE and ltmJ appear to be unique to the epichloe endophytes. The prenyltransferase ltmF is involved in the 27-hydroxyl-O-prenylation. The cytochrome P450 monooxygenase ltmK is required for the oxidative acetal ring formation. The multi-functional prenyltransferase ltmE is required for C20- and C21-prenylations of the indole ring of paspalanes and acts together with the cytochrome P450 monooxygenase ltmJ to yield lolitremanes by multiple oxidations and ring closures. The stereoisomer pairs of lolitriol and lolitrem N or lolitrem B and lolitrem F may be attributed to variations in the way in which ring closure can occur under the action of ltmJ. While the major product of this pathway is lolitrem B, the prenyl transferases and cytochrome P450 monooxygenases identified in this pathway have a remarkable versatility in their regio- and stereo-specificities to generate a diverse range of metabolites that are products of a metabolic grid rather than a linear pathway. The polypeptide is Terpene cyclase ltmB (Epichloe festucae var. lolii (Neotyphodium lolii)).